The following is a 349-amino-acid chain: Methylthioribose-1-phosphate isomerase (349 aa).

Residues 51–53 (RGA), Arg-94, and Gln-199 each bind substrate. Residue Asp-240 is the Proton donor of the active site. 250–251 (NK) lines the substrate pocket.

It belongs to the eIF-2B alpha/beta/delta subunits family. MtnA subfamily. In terms of assembly, homodimer.

The enzyme catalyses 5-(methylsulfanyl)-alpha-D-ribose 1-phosphate = 5-(methylsulfanyl)-D-ribulose 1-phosphate. Its pathway is amino-acid biosynthesis; L-methionine biosynthesis via salvage pathway; L-methionine from S-methyl-5-thio-alpha-D-ribose 1-phosphate: step 1/6. In terms of biological role, catalyzes the interconversion of methylthioribose-1-phosphate (MTR-1-P) into methylthioribulose-1-phosphate (MTRu-1-P). The chain is Methylthioribose-1-phosphate isomerase from Bacillus cytotoxicus (strain DSM 22905 / CIP 110041 / 391-98 / NVH 391-98).